We begin with the raw amino-acid sequence, 197 residues long: Small ribosomal subunit protein uS10c (197 aa).

The N-terminal 60 residues, 1–60 (MATSSLSTIVFSPLALSNSSSFPNKPQVSNLSLHSSLSNLRRTLSHSSPSSSSSSNVRVF), are a transit peptide targeting the chloroplast. A disordered region spans residues 67–91 (ESQETGPESYVEEGSETSALGIGAD).

It belongs to the universal ribosomal protein uS10 family. In terms of assembly, part of the 30S ribosomal subunit.

It localises to the plastid. It is found in the chloroplast. The protein is Small ribosomal subunit protein uS10c (RPS10) of Mesembryanthemum crystallinum (Common ice plant).